We begin with the raw amino-acid sequence, 325 residues long: Glycine--tRNA ligase alpha subunit (325 aa).

The protein belongs to the class-II aminoacyl-tRNA synthetase family. In terms of assembly, tetramer of two alpha and two beta subunits.

The protein localises to the cytoplasm. It catalyses the reaction tRNA(Gly) + glycine + ATP = glycyl-tRNA(Gly) + AMP + diphosphate. This Ralstonia nicotianae (strain ATCC BAA-1114 / GMI1000) (Ralstonia solanacearum) protein is Glycine--tRNA ligase alpha subunit.